The sequence spans 389 residues: Probable serine/threonine-protein kinase PBL24 (389 aa).

The interval 1-36 (MSCFLGPSTNNKSRENEGSSMAAPYEQQNLPRNDRR) is disordered. A lipid anchor (S-palmitoyl cysteine) is attached at cysteine 3. The 278-residue stretch at 71–348 (FRQEFLIGEG…SDVVTALSFM (278 aa)) folds into the Protein kinase domain. Residues 77-85 (IGEGGFGRV) and lysine 100 each bind ATP. Aspartate 198 acts as the Proton acceptor in catalysis. 2 positions are modified to phosphoserine: serine 202 and serine 232. Position 238 is a phosphothreonine (threonine 238). A Phosphotyrosine modification is found at tyrosine 246.

This sequence belongs to the protein kinase superfamily. Ser/Thr protein kinase family.

The protein localises to the cell membrane. The enzyme catalyses L-seryl-[protein] + ATP = O-phospho-L-seryl-[protein] + ADP + H(+). It catalyses the reaction L-threonyl-[protein] + ATP = O-phospho-L-threonyl-[protein] + ADP + H(+). Functionally, may be involved in plant defense signaling. This Arabidopsis thaliana (Mouse-ear cress) protein is Probable serine/threonine-protein kinase PBL24.